The following is a 432-amino-acid chain: Chaperone SurA (432 aa).

The first 26 residues, 1-26, serve as a signal peptide directing secretion; it reads MKKIASFCSAAVLIASSFLLNNTVQA. 2 consecutive PpiC domains span residues 176–277 and 286–386; these read QTEY…KVQD and VQEV…EVTG.

It localises to the periplasm. The catalysed reaction is [protein]-peptidylproline (omega=180) = [protein]-peptidylproline (omega=0). Functionally, chaperone involved in the correct folding and assembly of outer membrane proteins. Recognizes specific patterns of aromatic residues and the orientation of their side chains, which are found more frequently in integral outer membrane proteins. May act in both early periplasmic and late outer membrane-associated steps of protein maturation. The chain is Chaperone SurA from Idiomarina loihiensis (strain ATCC BAA-735 / DSM 15497 / L2-TR).